Reading from the N-terminus, the 585-residue chain is NADP-reducing hydrogenase subunit HndD (585 aa).

One can recognise a 2Fe-2S ferredoxin-type domain in the interval 2–85 (SMLTITIDGK…NMVVKTNSLR (84 aa)). [2Fe-2S] cluster-binding residues include Cys36, Cys52, Cys55, and Cys69. A 4Fe-4S His(Cys)3-ligated-type domain is found at 85–124 (RVLNARRTVLELLLSDHPKDCLVCAKSGECELQTLAERFG). [4Fe-4S] cluster is bound by residues His101, Cys105, Cys108, and Cys114. 2 4Fe-4S ferredoxin-type domains span residues 144 to 174 (ASII…VLSG) and 185 to 216 (PAFE…EHEY).

As to quaternary structure, heterotetramer composed of HndA, HndB, HndC and HndD subunits. HndD is probably the hydrogenase subunit. [4Fe-4S] cluster serves as cofactor.

The enzyme catalyses H2 + NADP(+) = NADPH + H(+). With respect to regulation, inhibited by oxygen. Its function is as follows. Catalyzes the reduction of NADP in the presence of molecular H(2) to yield NADPH. In Solidesulfovibrio fructosivorans (Desulfovibrio fructosivorans), this protein is NADP-reducing hydrogenase subunit HndD (hndD).